The following is a 91-amino-acid chain: Probable Fe(2+)-trafficking protein (91 aa).

It belongs to the Fe(2+)-trafficking protein family.

Functionally, could be a mediator in iron transactions between iron acquisition and iron-requiring processes, such as synthesis and/or repair of Fe-S clusters in biosynthetic enzymes. This Actinobacillus pleuropneumoniae serotype 5b (strain L20) protein is Probable Fe(2+)-trafficking protein.